The following is a 2080-amino-acid chain: Dedicator of cytokinesis protein 6 (2080 aa).

Basic and acidic residues predominate over residues Glu20 to Gly31. 3 disordered regions span residues Glu20–Gly44, Gln156–Ser189, and Pro408–Ala441. The segment covering Ser32–Ser42 has biased composition (low complexity). Residue Ser178 is modified to Phosphoserine. Residues Pro408–Glu425 show a composition bias toward basic and acidic residues. The C2 DOCK-type domain maps to Arg546–Val712. The residue at position 863 (Arg863) is an Omega-N-methylarginine. Ser870, Ser878, and Ser882 each carry phosphoserine. A disordered region spans residues Ala1101–Asp1123. The segment covering Ser1104–Pro1122 has biased composition (low complexity). Position 1341 is a phosphoserine (Ser1341). In terms of domain architecture, DOCKER spans Arg1620–Pro2056. At Thr2064 the chain carries Phosphothreonine. Phosphoserine occurs at positions 2065 and 2069.

Belongs to the DOCK family. In terms of tissue distribution, widely expressed with highest levels in lung and heart.

It is found in the cytoplasm. It localises to the perinuclear region. Acts as a guanine nucleotide exchange factor (GEF) for CDC42 and RAC1 small GTPases. Through its activation of CDC42 and RAC1, regulates neurite outgrowth in an vitro differentiation system. This Mus musculus (Mouse) protein is Dedicator of cytokinesis protein 6 (Dock6).